Reading from the N-terminus, the 88-residue chain is Small ribosomal subunit protein uS17 (88 aa).

Belongs to the universal ribosomal protein uS17 family. Part of the 30S ribosomal subunit.

One of the primary rRNA binding proteins, it binds specifically to the 5'-end of 16S ribosomal RNA. This is Small ribosomal subunit protein uS17 from Prochlorococcus marinus (strain SARG / CCMP1375 / SS120).